The following is a 267-amino-acid chain: Phosphoethanolamine/phosphocholine phosphatase (267 aa).

The active-site Nucleophile is Asp32. Mg(2+) is bound by residues Asp32 and Asp34. The active-site Proton donor is the Asp34. Substrate is bound by residues Asp43 and Asp123. Asp203 serves as a coordination point for Mg(2+).

Belongs to the HAD-like hydrolase superfamily. PHOSPHO family. Mg(2+) is required as a cofactor. Expressed at sites of mineralization in bone and cartilage. Highly expressed in osteoblast cell line SaOS-2 which produces a mineralized matrix, but not in MG-63 cell line, which do not mineralize.

The protein resides in the extracellular vesicle. The enzyme catalyses phosphoethanolamine + H2O = ethanolamine + phosphate. It catalyses the reaction phosphocholine + H2O = choline + phosphate. Phosphatase that has a high activity toward phosphoethanolamine (PEA) and phosphocholine (PCho). Involved in the generation of inorganic phosphate for bone mineralization. Acts in a non-redundant manner with PHOSPHO1 in skeletal mineralization: while PHOSPHO1 mediates the initiation of hydroxyapatite crystallization in the matrix vesicles (MVs), ALPL/TNAP catalyzes the spread of hydroxyapatite crystallization in the extracellular matrix. In Homo sapiens (Human), this protein is Phosphoethanolamine/phosphocholine phosphatase.